The sequence spans 173 residues: Crossover junction endodeoxyribonuclease RuvC (173 aa).

Active-site residues include Asp-8, Glu-67, and Asp-139. Mg(2+)-binding residues include Asp-8, Glu-67, and Asp-139.

This sequence belongs to the RuvC family. In terms of assembly, homodimer which binds Holliday junction (HJ) DNA. The HJ becomes 2-fold symmetrical on binding to RuvC with unstacked arms; it has a different conformation from HJ DNA in complex with RuvA. In the full resolvosome a probable DNA-RuvA(4)-RuvB(12)-RuvC(2) complex forms which resolves the HJ. The cofactor is Mg(2+).

It is found in the cytoplasm. The enzyme catalyses Endonucleolytic cleavage at a junction such as a reciprocal single-stranded crossover between two homologous DNA duplexes (Holliday junction).. In terms of biological role, the RuvA-RuvB-RuvC complex processes Holliday junction (HJ) DNA during genetic recombination and DNA repair. Endonuclease that resolves HJ intermediates. Cleaves cruciform DNA by making single-stranded nicks across the HJ at symmetrical positions within the homologous arms, yielding a 5'-phosphate and a 3'-hydroxyl group; requires a central core of homology in the junction. The consensus cleavage sequence is 5'-(A/T)TT(C/G)-3'. Cleavage occurs on the 3'-side of the TT dinucleotide at the point of strand exchange. HJ branch migration catalyzed by RuvA-RuvB allows RuvC to scan DNA until it finds its consensus sequence, where it cleaves and resolves the cruciform DNA. This Aeromonas salmonicida (strain A449) protein is Crossover junction endodeoxyribonuclease RuvC.